A 378-amino-acid chain; its full sequence is UDP-4-amino-4-deoxy-L-arabinose--oxoglutarate aminotransferase (378 aa).

At lysine 182 the chain carries N6-(pyridoxal phosphate)lysine.

The protein belongs to the DegT/DnrJ/EryC1 family. ArnB subfamily. As to quaternary structure, homodimer. Requires pyridoxal 5'-phosphate as cofactor.

It catalyses the reaction UDP-4-amino-4-deoxy-beta-L-arabinose + 2-oxoglutarate = UDP-beta-L-threo-pentopyranos-4-ulose + L-glutamate. It functions in the pathway nucleotide-sugar biosynthesis; UDP-4-deoxy-4-formamido-beta-L-arabinose biosynthesis; UDP-4-deoxy-4-formamido-beta-L-arabinose from UDP-alpha-D-glucuronate: step 2/3. Its pathway is bacterial outer membrane biogenesis; lipopolysaccharide biosynthesis. Its function is as follows. Catalyzes the conversion of UDP-4-keto-arabinose (UDP-Ara4O) to UDP-4-amino-4-deoxy-L-arabinose (UDP-L-Ara4N). The modified arabinose is attached to lipid A and is required for resistance to polymyxin and cationic antimicrobial peptides. In Aeromonas hydrophila subsp. hydrophila (strain ATCC 7966 / DSM 30187 / BCRC 13018 / CCUG 14551 / JCM 1027 / KCTC 2358 / NCIMB 9240 / NCTC 8049), this protein is UDP-4-amino-4-deoxy-L-arabinose--oxoglutarate aminotransferase.